Consider the following 917-residue polypeptide: MTDETVKSLAEEIQTPVERLVQQFADAGIEKTVSDSVSQKEKETLLAWLNRDKDISTGQPSKLTLQRKVRSTLSVPGTGGKSKSVAIEVRKKRTYVNRDVIEKSQAEEQALREAEEKAHREVEEKAQREAQEKAQRAAEEKAKREAQEAKKQAEEKAKREAEEAKREAAELAKREAAEKNKVKQNDKPKADVADQDKARRNAELAELKRKTEEAQRLKVEEETRAAAEKARRLAEENAEKWTAEPKAPETESADYHVTTSRYARDAEDESDAEVEGDRRRGRTAKAPRAKKNNRHSEKADREEARAAGRSNKKGKRKSSTLQQGFHKPAVAVNRDVIIGETISVAELANKMAVKGSEVIKTMMKMGAMATINQVLDQETAQLVAEEMGHKVILRRENELEEQVMNDRDTGEESEVSRAPVVTIMGHVDHGKTSLLDYIRSTKVASGEAGGITQHIGAYHVKTDKGEITFLDTPGHAAFTSMRARGAQVTDIVVLVVAADDGVMPQTIEAIQHAKAANVPVVVAVNKIDKHEADPDRVKTELSQYGILSEDWGGETQFMHVSAKQGLGIDELLDAILLQAEVLELKAVKEGMASGVVIESYLDKGRGPVATILVREGTLNKGDIVLCGFEYGRIRAMRNELGQEVQSAGPSMPVEILGLSNVPSAGDEATVVRDEKKAREVALYRQGKFREVKLARQQKSKLENMFANMEEGKVSELNIVLKTDVQGTCEAITDALVKLSTDEVKLRIIGSGVGGITETDATLAAASEAIILGFNVRADASARRIIEQESVDLRYYSVIYSLIDEIKLAMSGMLAPEYKQEIMGLAEVRDVFKSPKFGAVAGCMVVEGNIKRNNPIRVLRDNVVIYEGELESLRRFKDDVNEVRNGMECGIGVKNYNDVRVGDMIEVFQVIEIKRSIA.

The segment covering 102–249 (EKSQAEEQAL…KWTAEPKAPE (148 aa)) has biased composition (basic and acidic residues). A disordered region spans residues 102–326 (EKSQAEEQAL…KSSTLQQGFH (225 aa)). Basic residues predominate over residues 279–293 (RRGRTAKAPRAKKNN). The span at 294–306 (RHSEKADREEARA) shows a compositional bias: basic and acidic residues. The tr-type G domain maps to 416–585 (SRAPVVTIMG…LLQAEVLELK (170 aa)). The segment at 425–432 (GHVDHGKT) is G1. 425–432 (GHVDHGKT) is a GTP binding site. The segment at 450 to 454 (GITQH) is G2. The G3 stretch occupies residues 471–474 (DTPG). GTP is bound by residues 471 to 475 (DTPGH) and 525 to 528 (NKID). The tract at residues 525–528 (NKID) is G4. The interval 561 to 563 (SAK) is G5.

Belongs to the TRAFAC class translation factor GTPase superfamily. Classic translation factor GTPase family. IF-2 subfamily.

It is found in the cytoplasm. In terms of biological role, one of the essential components for the initiation of protein synthesis. Protects formylmethionyl-tRNA from spontaneous hydrolysis and promotes its binding to the 30S ribosomal subunits. Also involved in the hydrolysis of GTP during the formation of the 70S ribosomal complex. This chain is Translation initiation factor IF-2 (infB), found in Proteus vulgaris.